The sequence spans 1369 residues: Phosphoribosylformylglycinamidine synthase (1369 aa).

Disordered regions lie at residues 321 to 352 and 373 to 400; these read HPTAISPFPGASTGAGGEIRDEGATGRGAKPK and ENARDTAQPAAQRNPGDTAPGPVGKPDR. An ATP-binding site is contributed by 330–341; sequence GASTGAGGEIRD. Position 721 (alanine 721) interacts with ATP. Residues aspartate 722, glutamate 761, asparagine 765, and aspartate 934 each coordinate Mg(2+). Serine 936 serves as a coordination point for ATP. Residues 1116-1369 enclose the Glutamine amidotransferase type-1 domain; it reads MAILREQGVN…MFRNARKQMG (254 aa). The Nucleophile role is filled by cysteine 1209. Active-site residues include histidine 1330 and glutamate 1332.

This sequence in the N-terminal section; belongs to the FGAMS family. In terms of assembly, monomer.

It is found in the cytoplasm. It catalyses the reaction N(2)-formyl-N(1)-(5-phospho-beta-D-ribosyl)glycinamide + L-glutamine + ATP + H2O = 2-formamido-N(1)-(5-O-phospho-beta-D-ribosyl)acetamidine + L-glutamate + ADP + phosphate + H(+). The protein operates within purine metabolism; IMP biosynthesis via de novo pathway; 5-amino-1-(5-phospho-D-ribosyl)imidazole from N(2)-formyl-N(1)-(5-phospho-D-ribosyl)glycinamide: step 1/2. Functionally, phosphoribosylformylglycinamidine synthase involved in the purines biosynthetic pathway. Catalyzes the ATP-dependent conversion of formylglycinamide ribonucleotide (FGAR) and glutamine to yield formylglycinamidine ribonucleotide (FGAM) and glutamate. The chain is Phosphoribosylformylglycinamidine synthase from Ralstonia nicotianae (strain ATCC BAA-1114 / GMI1000) (Ralstonia solanacearum).